Here is a 397-residue protein sequence, read N- to C-terminus: MKEKVVLAYSGGLDTSIIIPWLKENYDLDVIAVCVNVGQGDDMDYVKTKAIKSGASKIYVEDVKEEFVVDYLYKAIKSEALYEQDYMLGTSFARPLMAKKLVEIAHKEQAKYICHGCTGKGNDQVRFEVGVKAQDPTIKIIAPWRIWDIKSREDAIDYAKKVGVEVPVTKKKIYSVDRNLWHVSHEGGDLEDLKNEHKEDMYFMVTPPEKAKDEPTYLEIYFEKGVPVKINGEFLNPVDIIDKLNTIGGENGIGIADIIENRLVGMKSRGIYETPAGTLLYAAHKKLESVTLDKYTYQYKKLVSAQYGELVYNGLWFTALREAIDAFVDKTQENVTGTVKLKLYKGNIKPCSVDTEYALYDEGISSFGESELYSHKDAEGFINLFGLPCKIKALKNF.

8-16 lines the ATP pocket; that stretch reads AYSGGLDTS. L-citrulline-binding residues include Y86 and S91. Residue G116 participates in ATP binding. Residues T118, N122, and D123 each coordinate L-aspartate. An L-citrulline-binding site is contributed by N122. Residues R126, S175, S184, E260, and Y272 each coordinate L-citrulline.

Belongs to the argininosuccinate synthase family. Type 1 subfamily. In terms of assembly, homotetramer.

The protein localises to the cytoplasm. It catalyses the reaction L-citrulline + L-aspartate + ATP = 2-(N(omega)-L-arginino)succinate + AMP + diphosphate + H(+). It functions in the pathway amino-acid biosynthesis; L-arginine biosynthesis; L-arginine from L-ornithine and carbamoyl phosphate: step 2/3. The protein is Argininosuccinate synthase of Clostridium botulinum (strain Langeland / NCTC 10281 / Type F).